The sequence spans 414 residues: MIAEIIAVGSEMLTPFRQDTNSLYLTEKFNSLGVTIAFKTIVGDKQRHLVDAIRQALRRVDIVAISGGLGPTEDDLTRECVAEALGRTLTRDAALIANMYARAAARRVTITRNNEKQADVIDGAVILENGRGTAPGQWLDIVHGEHRKLLMLLPGPPSELKGMFDEQCMPLLADALPKRAIAMRVLKAAMIGESQCDARIAPIYQQYTDIETTILAHLGDIQLNLSCSKPFLAQARLRVDELASRIEEELDDVLYSSQGETLEQIVLYYLEMRGASLAVAESCTGGLISERLTGIPGSSRSFAGGAVVYSNELKTLLAGVDPELIGSYGAVSSQVAKALAEGIRERCSAHFGLGVTGIAGPGGGSEDKPVGLVYLAVSTPEETTVLERRFTGDRHRIRHLAAQQALDMVRRRLM.

The protein belongs to the CinA family.

This is CinA-like protein from Acidobacterium capsulatum (strain ATCC 51196 / DSM 11244 / BCRC 80197 / JCM 7670 / NBRC 15755 / NCIMB 13165 / 161).